The sequence spans 120 residues: Large ribosomal subunit protein uL22 (120 aa).

The protein belongs to the universal ribosomal protein uL22 family. Part of the 50S ribosomal subunit.

Functionally, this protein binds specifically to 23S rRNA; its binding is stimulated by other ribosomal proteins, e.g. L4, L17, and L20. It is important during the early stages of 50S assembly. It makes multiple contacts with different domains of the 23S rRNA in the assembled 50S subunit and ribosome. Its function is as follows. The globular domain of the protein is located near the polypeptide exit tunnel on the outside of the subunit, while an extended beta-hairpin is found that lines the wall of the exit tunnel in the center of the 70S ribosome. The polypeptide is Large ribosomal subunit protein uL22 (Borreliella afzelii (strain PKo) (Borrelia afzelii)).